The sequence spans 472 residues: Relaxin-3 receptor 1 (472 aa).

Over 1 to 81 (MQVASATPAA…ESTDTEARVR (81 aa)) the chain is Extracellular. Asn-36 and Asn-40 each carry an N-linked (GlcNAc...) asparagine glycan. A helical transmembrane segment spans residues 82 to 102 (ILISAVYWVVCALGLAGNLLV). The Cytoplasmic segment spans residues 103-119 (LYLMKSKQGWRKSSINL). A helical transmembrane segment spans residues 120–140 (FVTNLALTDFQFVLTLPFWAV). At 141–156 (ENALDFKWPFGKAMCK) the chain is on the extracellular side. A disulfide bridge connects residues Cys-155 and Cys-247. A helical membrane pass occupies residues 157–177 (IVSMVTSMNMYASVFFLTAMS). The Cytoplasmic portion of the chain corresponds to 178 to 215 (VARYHSVASALKSHRTRGRGRGDCCGQSLRESCCFSAK). A helical transmembrane segment spans residues 216–236 (VLCGLIWASAALASLPNAIFS). Over 237–270 (TTIRVLGEELCLMHFPDKLLGWDRQFWLGLYHLQ) the chain is Extracellular. A helical transmembrane segment spans residues 271–291 (KVLLGFLLPLSIISLCYLLLV). Over 292–298 (RFISDRR) the chain is Cytoplasmic. A helical transmembrane segment spans residues 299–319 (VVGTTDAVGAAAAPGGGLSTA). The Extracellular segment spans residues 320–332 (SARRRSKVTKSVT). Residues 333–353 (IVVLSFFLCWLPNQALTTWSI) form a helical membrane-spanning segment. Residues 354–472 (LIKFNAVPFS…YDLLPSSSAY (119 aa)) are Cytoplasmic-facing.

The protein belongs to the G-protein coupled receptor 1 family.

The protein localises to the cell membrane. Its function is as follows. Receptor for RNL3/relaxin-3. Binding of the ligand inhibit cAMP accumulation. The polypeptide is Relaxin-3 receptor 1 (Rxfp3) (Mus musculus (Mouse)).